Reading from the N-terminus, the 543-residue chain is Glutamyl-tRNA(Gln) amidotransferase subunit A, chloroplastic/mitochondrial (543 aa).

Residues Lys123 and Ser198 each act as charge relay system in the active site. Ser222 (acyl-ester intermediate) is an active-site residue.

This sequence belongs to the amidase family. GatA subfamily. As to quaternary structure, subunit of the heterotrimeric GatCAB amidotransferase (AdT) complex, composed of A, B and C subunits.

The protein localises to the mitochondrion. Its subcellular location is the plastid. It localises to the chloroplast stroma. The catalysed reaction is L-glutamyl-tRNA(Gln) + L-glutamine + ATP + H2O = L-glutaminyl-tRNA(Gln) + L-glutamate + ADP + phosphate + H(+). Allows the formation of correctly charged Gln-tRNA(Gln) through the transamidation of misacylated Glu-tRNA(Gln) in chloroplasts and mitochondria. The reaction takes place in the presence of glutamine and ATP through an activated gamma-phospho-Glu-tRNA(Gln). This Oryza sativa subsp. indica (Rice) protein is Glutamyl-tRNA(Gln) amidotransferase subunit A, chloroplastic/mitochondrial.